A 1347-amino-acid chain; its full sequence is Protocadherin-11 X-linked (1347 aa).

The signal sequence occupies residues 1–23 (MDLLSGTYIFAVLLACVVFHSGA). Residues 24-812 (QEKNYTIREE…VSSPTNDYVK (789 aa)) are Extracellular-facing. Cadherin domains lie at 26–139 (KNYT…APLF), 140–249 (PATV…HPVF), 250–355 (KETE…VPSI), 362–466 (NPVN…APVF), 467–570 (TQSF…SPVF), 571–673 (THNE…KPVF), and 677–795 (PSNY…APVT). Residues N27, N48, and N54 are each glycosylated (N-linked (GlcNAc...) asparagine). N344 carries N-linked (GlcNAc...) asparagine glycosylation. N553 carries an N-linked (GlcNAc...) asparagine glycan. Residue N773 is glycosylated (N-linked (GlcNAc...) asparagine). A helical membrane pass occupies residues 813–833 (ILVAAVAGTITVVVVIFITAV). The Cytoplasmic portion of the chain corresponds to 834–1347 (VRCRQAPHLK…DSPIMEEHPL (514 aa)). Disordered stretches follow at residues 1057 to 1091 (LPEG…GYPQ), 1097 to 1116 (RATP…ESTF), and 1326 to 1347 (FTPR…EHPL).

The protein localises to the cell membrane. Potential calcium-dependent cell-adhesion protein. The polypeptide is Protocadherin-11 X-linked (PCDH11X) (Gorilla gorilla gorilla (Western lowland gorilla)).